The primary structure comprises 88 residues: UPF0297 protein BT9727_4120 (88 aa).

This sequence belongs to the UPF0297 family.

The sequence is that of UPF0297 protein BT9727_4120 from Bacillus thuringiensis subsp. konkukian (strain 97-27).